A 255-amino-acid chain; its full sequence is Phosphate import ATP-binding protein PstB (255 aa).

An ABC transporter domain is found at 9–250 (IAVQNLNFYY…PKIQRTEDYI (242 aa)). Residue 41–48 (GPSGCGKS) participates in ATP binding.

This sequence belongs to the ABC transporter superfamily. Phosphate importer (TC 3.A.1.7) family. The complex is composed of two ATP-binding proteins (PstB), two transmembrane proteins (PstC and PstA) and a solute-binding protein (PstS).

The protein localises to the cell inner membrane. It catalyses the reaction phosphate(out) + ATP + H2O = ADP + 2 phosphate(in) + H(+). Part of the ABC transporter complex PstSACB involved in phosphate import. Responsible for energy coupling to the transport system. The chain is Phosphate import ATP-binding protein PstB from Haemophilus influenzae (strain 86-028NP).